The primary structure comprises 116 residues: Staphylococcal complement inhibitor (116 aa).

The signal sequence occupies residues 1–31 (MKIRKSILAGTLAIVLASPLVTNLDKNEAQA). Residues 62–79 (LATGSLNTYYKRTIKISG) form an essential for activity region.

Belongs to the SCIN family.

Its subcellular location is the secreted. Its function is as follows. Involved in countering the first line of host defense mechanisms. Efficiently inhibits opsonization, phagocytosis and killing of S.aureus by human neutrophils. Acts by binding and stabilizing human C3 convertases (C4b2a and C3bBb), leading to their inactivation. The convertases are no longer able to cleave complement C3, therefore preventing further C3b deposition on the bacterial surface and phagocytosis of the bacterium. Also prevents C5a-induced neutrophil responses. The polypeptide is Staphylococcal complement inhibitor (scn) (Staphylococcus aureus (strain N315)).